The following is a 453-amino-acid chain: tRNA modification GTPase MnmE (453 aa).

Residues arginine 22, glutamate 79, and lysine 119 each coordinate (6S)-5-formyl-5,6,7,8-tetrahydrofolate. One can recognise a TrmE-type G domain in the interval 215–376 (GMKVVIAGRP…LQQHLKSLMG (162 aa)). Asparagine 225 is a K(+) binding site. GTP-binding positions include 225–230 (NAGKSS), 244–250 (TEIAGTT), 269–272 (DTAG), and 334–337 (NKAD). Serine 229 serves as a coordination point for Mg(2+). K(+) contacts are provided by threonine 244, isoleucine 246, and threonine 249. Threonine 250 contacts Mg(2+). Lysine 453 provides a ligand contact to (6S)-5-formyl-5,6,7,8-tetrahydrofolate.

This sequence belongs to the TRAFAC class TrmE-Era-EngA-EngB-Septin-like GTPase superfamily. TrmE GTPase family. Homodimer. Heterotetramer of two MnmE and two MnmG subunits. K(+) serves as cofactor.

It localises to the cytoplasm. Its function is as follows. Exhibits a very high intrinsic GTPase hydrolysis rate. Involved in the addition of a carboxymethylaminomethyl (cmnm) group at the wobble position (U34) of certain tRNAs, forming tRNA-cmnm(5)s(2)U34. The sequence is that of tRNA modification GTPase MnmE from Shewanella sediminis (strain HAW-EB3).